A 117-amino-acid polypeptide reads, in one-letter code: UPF0342 protein BLi01058/BL02870 (117 aa).

It belongs to the UPF0342 family.

The sequence is that of UPF0342 protein BLi01058/BL02870 from Bacillus licheniformis (strain ATCC 14580 / DSM 13 / JCM 2505 / CCUG 7422 / NBRC 12200 / NCIMB 9375 / NCTC 10341 / NRRL NRS-1264 / Gibson 46).